Reading from the N-terminus, the 254-residue chain is Proteasome activator complex subunit 3 (254 aa).

The residue at position 2 (Ala-2) is an N-acetylalanine. Residues Ser-17 and Ser-24 each carry the phosphoserine modification. N6-acetyllysine; by P300/CBP is present on Lys-195. Phosphoserine; by CHEK2 is present on Ser-247.

It belongs to the PA28 family. Homoheptamer; the stability of the heptamer is essential for the specific activation of the trypsine-like subunit and inhibition of the chymotrypsin-like and postglutamyl-preferring (PGPH) subunits of the proteasome. Interacts with p53/TP53, MDM2 and MAP3K3. Associates with the proteasome. Interacts with CCAR2. Interacts with PSME3IP1 (via C-terminus); the interaction is direct and promotes the association of PSME3 with the 20S proteasome. Interacts with COIL; the interaction is inhibited by PSME3IP1. Post-translationally, phosphorylated by MAP3K3. Phosphorylation at Ser-247 promotes its association with CCAR2. Acetylation at the major site Lys-195 is important for oligomerization and ability to degrade its target substrates. Deacetylated by SIRT1.

Its subcellular location is the nucleus. It localises to the cytoplasm. Its function is as follows. Subunit of the 11S REG-gamma (also called PA28-gamma) proteasome regulator, a doughnut-shaped homoheptamer which associates with the proteasome. 11S REG-gamma activates the trypsin-like catalytic subunit of the proteasome but inhibits the chymotrypsin-like and postglutamyl-preferring (PGPH) subunits. Facilitates the MDM2-p53/TP53 interaction which promotes ubiquitination- and MDM2-dependent proteasomal degradation of p53/TP53, limiting its accumulation and resulting in inhibited apoptosis after DNA damage. May also be involved in cell cycle regulation. Mediates CCAR2 and CHEK2-dependent SIRT1 inhibition. The protein is Proteasome activator complex subunit 3 (PSME3) of Pongo abelii (Sumatran orangutan).